The sequence spans 114 residues: MKKKYTIRKKIFGFLEKPRVSIFRSNKHIYAQVIDDYKGNTLISASSKKLLKFYKKRREKKITKKELSYKIGNLLGKIIKSYGISKILFDRNGYIYHGRVKALAKGLRNVGLQF.

The protein belongs to the universal ribosomal protein uL18 family. As to quaternary structure, part of the 50S ribosomal subunit; part of the 5S rRNA/L5/L18/L25 subcomplex. Contacts the 5S and 23S rRNAs.

In terms of biological role, this is one of the proteins that bind and probably mediate the attachment of the 5S RNA into the large ribosomal subunit, where it forms part of the central protuberance. This chain is Large ribosomal subunit protein uL18, found in Aster yellows phytoplasma.